We begin with the raw amino-acid sequence, 90 residues long: Defensin-like protein 178 (90 aa).

The signal sequence occupies residues 1–23 (MAKATSSLVVPIIFLVIFALVEQ). Cystine bridges form between Cys27-Cys66, Cys36-Cys55, Cys39-Cys60, and Cys43-Cys62.

It belongs to the DEFL family.

The protein resides in the secreted. In Arabidopsis thaliana (Mouse-ear cress), this protein is Defensin-like protein 178 (LCR64).